We begin with the raw amino-acid sequence, 164 residues long: SsrA-binding protein (164 aa).

Belongs to the SmpB family.

It is found in the cytoplasm. In terms of biological role, required for rescue of stalled ribosomes mediated by trans-translation. Binds to transfer-messenger RNA (tmRNA), required for stable association of tmRNA with ribosomes. tmRNA and SmpB together mimic tRNA shape, replacing the anticodon stem-loop with SmpB. tmRNA is encoded by the ssrA gene; the 2 termini fold to resemble tRNA(Ala) and it encodes a 'tag peptide', a short internal open reading frame. During trans-translation Ala-aminoacylated tmRNA acts like a tRNA, entering the A-site of stalled ribosomes, displacing the stalled mRNA. The ribosome then switches to translate the ORF on the tmRNA; the nascent peptide is terminated with the 'tag peptide' encoded by the tmRNA and targeted for degradation. The ribosome is freed to recommence translation, which seems to be the essential function of trans-translation. The chain is SsrA-binding protein from Shewanella sediminis (strain HAW-EB3).